The chain runs to 97 residues: Co-chaperonin GroES (97 aa).

Belongs to the GroES chaperonin family. Heptamer of 7 subunits arranged in a ring. Interacts with the chaperonin GroEL.

The protein localises to the cytoplasm. Its function is as follows. Together with the chaperonin GroEL, plays an essential role in assisting protein folding. The GroEL-GroES system forms a nano-cage that allows encapsulation of the non-native substrate proteins and provides a physical environment optimized to promote and accelerate protein folding. GroES binds to the apical surface of the GroEL ring, thereby capping the opening of the GroEL channel. The chain is Co-chaperonin GroES from Pseudomonas putida (strain GB-1).